Reading from the N-terminus, the 734-residue chain is Photosystem I P700 chlorophyll a apoprotein A2 (734 aa).

The next 8 membrane-spanning stretches (helical) occupy residues Ile-46–Ala-69, Leu-135–Gln-158, Leu-175–Ile-199, Ile-273–Tyr-291, Leu-330–Tyr-353, Ala-369–Ile-395, Ala-417–His-439, and Phe-517–Val-535. Positions 559 and 568 each coordinate [4Fe-4S] cluster. 2 consecutive transmembrane segments (helical) span residues Ala-575–Trp-596 and Leu-643–Ile-665. His-654, Met-662, and Tyr-670 together coordinate chlorophyll a. Trp-671 contacts phylloquinone. The helical transmembrane segment at Leu-707 to Ala-727 threads the bilayer.

Belongs to the PsaA/PsaB family. As to quaternary structure, the PsaA/B heterodimer binds the P700 chlorophyll special pair and subsequent electron acceptors. PSI consists of a core antenna complex that captures photons, and an electron transfer chain that converts photonic excitation into a charge separation. The eukaryotic PSI reaction center is composed of at least 11 subunits. The cofactor is P700 is a chlorophyll a/chlorophyll a' dimer, A0 is one or more chlorophyll a, A1 is one or both phylloquinones and FX is a shared 4Fe-4S iron-sulfur center..

The protein localises to the plastid. The protein resides in the chloroplast thylakoid membrane. The catalysed reaction is reduced [plastocyanin] + hnu + oxidized [2Fe-2S]-[ferredoxin] = oxidized [plastocyanin] + reduced [2Fe-2S]-[ferredoxin]. PsaA and PsaB bind P700, the primary electron donor of photosystem I (PSI), as well as the electron acceptors A0, A1 and FX. PSI is a plastocyanin-ferredoxin oxidoreductase, converting photonic excitation into a charge separation, which transfers an electron from the donor P700 chlorophyll pair to the spectroscopically characterized acceptors A0, A1, FX, FA and FB in turn. Oxidized P700 is reduced on the lumenal side of the thylakoid membrane by plastocyanin. The chain is Photosystem I P700 chlorophyll a apoprotein A2 from Phalaenopsis aphrodite subsp. formosana (Moth orchid).